A 296-amino-acid chain; its full sequence is Ribonuclease HIII (296 aa).

The 217-residue stretch at 80–296 (LALIGSDEVG…NTKKAYQRLK (217 aa)) folds into the RNase H type-2 domain. Asp-86, Glu-87, and Asp-191 together coordinate a divalent metal cation.

Belongs to the RNase HII family. RnhC subfamily. Mn(2+) is required as a cofactor. It depends on Mg(2+) as a cofactor.

Its subcellular location is the cytoplasm. The enzyme catalyses Endonucleolytic cleavage to 5'-phosphomonoester.. In terms of biological role, endonuclease that specifically degrades the RNA of RNA-DNA hybrids. The sequence is that of Ribonuclease HIII from Streptococcus thermophilus (strain CNRZ 1066).